The chain runs to 323 residues: Apolipoprotein E (323 aa).

The signal sequence occupies residues 1-18; that stretch reads MKVLWAALVVTLLAGCWA. 8 tandem repeats follow at residues 86-107, 108-129, 130-151, 152-173, 174-195, 196-217, 218-239, and 240-261. The segment at 86-261 is 8 X 22 AA approximate tandem repeats; it reads ALMDETMKEV…HLEEMREQIQ (176 aa). At M149 the chain carries Methionine sulfoxide. S153 is modified (phosphoserine). Positions 164 to 174 are LDL and other lipoprotein receptors binding; the sequence is HMRKLRKRVLR. 168 to 171 contacts heparin; that stretch reads LRKR. The interval 216 to 296 is lipid-binding and lipoprotein association; it reads NAKVGALATQ…SWFEPLLEDM (81 aa). 235–242 is a binding site for heparin; sequence GQQLRGQL. Positions 272–323 are homooligomerization; that stretch reads DQIRQKAEAFQARLKSWFEPLLEDMQRQWDGLVEKVQAAVATIPTSKPVEEP. Residues 284-296 are specificity for association with VLDL; sequence RLKSWFEPLLEDM.

Belongs to the apolipoprotein A1/A4/E family. Homotetramer. May interact with ABCA1; functionally associated with ABCA1 in the biogenesis of HDLs. May interact with APP/A4 amyloid-beta peptide; the interaction is extremely stable in vitro but its physiological significance is unclear. May interact with MAPT. May interact with MAP2. In the cerebrospinal fluid, interacts with secreted SORL1. Interacts with PMEL; this allows the loading of PMEL luminal fragment on ILVs to induce fibril nucleation. Post-translationally, APOE exists as multiple glycosylated and sialylated glycoforms within cells and in plasma. The extent of glycosylation and sialylation are tissue and context specific. In terms of processing, glycated in plasma VLDL. Phosphorylated by FAM20C in the extracellular medium.

It is found in the secreted. It localises to the extracellular space. The protein resides in the extracellular matrix. Its subcellular location is the extracellular vesicle. The protein localises to the endosome. It is found in the multivesicular body. APOE is an apolipoprotein, a protein associating with lipid particles, that mainly functions in lipoprotein-mediated lipid transport between organs via the plasma and interstitial fluids. APOE is a core component of plasma lipoproteins and is involved in their production, conversion and clearance. Apolipoproteins are amphipathic molecules that interact both with lipids of the lipoprotein particle core and the aqueous environment of the plasma. As such, APOE associates with chylomicrons, chylomicron remnants, very low density lipoproteins (VLDL) and intermediate density lipoproteins (IDL) but shows a preferential binding to high-density lipoproteins (HDL). It also binds a wide range of cellular receptors including the LDL receptor/LDLR and the very low-density lipoprotein receptor/VLDLR that mediate the cellular uptake of the APOE-containing lipoprotein particles. Finally, APOE also has a heparin-binding activity and binds heparan-sulfate proteoglycans on the surface of cells, a property that supports the capture and the receptor-mediated uptake of APOE-containing lipoproteins by cells. In Canis lupus familiaris (Dog), this protein is Apolipoprotein E (APOE).